The sequence spans 418 residues: 4-hydroxy-3-methylbut-2-en-1-yl diphosphate synthase (flavodoxin) (418 aa).

[4Fe-4S] cluster-binding residues include cysteine 305, cysteine 308, cysteine 351, and glutamate 358.

The protein belongs to the IspG family. The cofactor is [4Fe-4S] cluster.

It catalyses the reaction (2E)-4-hydroxy-3-methylbut-2-enyl diphosphate + oxidized [flavodoxin] + H2O + 2 H(+) = 2-C-methyl-D-erythritol 2,4-cyclic diphosphate + reduced [flavodoxin]. The protein operates within isoprenoid biosynthesis; isopentenyl diphosphate biosynthesis via DXP pathway; isopentenyl diphosphate from 1-deoxy-D-xylulose 5-phosphate: step 5/6. In terms of biological role, converts 2C-methyl-D-erythritol 2,4-cyclodiphosphate (ME-2,4cPP) into 1-hydroxy-2-methyl-2-(E)-butenyl 4-diphosphate. The protein is 4-hydroxy-3-methylbut-2-en-1-yl diphosphate synthase (flavodoxin) of Bartonella bacilliformis (strain ATCC 35685 / KC583 / Herrer 020/F12,63).